Reading from the N-terminus, the 168-residue chain is Leukotoxin-activating lysine-acyltransferase LtxC (168 aa).

Catalysis depends on residues histidine 23 and aspartate 92.

The protein belongs to the RTX toxin acyltransferase family.

The protein localises to the cytoplasm. It catalyses the reaction a fatty acyl-[ACP] + L-lysyl-[protein] = N(6)-(fatty acyl)-L-lysyl-[protein] + holo-[ACP] + H(+). Its function is as follows. Required for full activity and modification of the LtxA leukotoxin. Involved in fatty acid modification of the protoxin at two internal lysine residues, thereby converting it to the active toxin. The protein is Leukotoxin-activating lysine-acyltransferase LtxC of Aggregatibacter actinomycetemcomitans (Actinobacillus actinomycetemcomitans).